The chain runs to 500 residues: Aspartyl/glutamyl-tRNA(Asn/Gln) amidotransferase subunit B (500 aa).

This sequence belongs to the GatB/GatE family. GatB subfamily. As to quaternary structure, heterotrimer of A, B and C subunits.

The enzyme catalyses L-glutamyl-tRNA(Gln) + L-glutamine + ATP + H2O = L-glutaminyl-tRNA(Gln) + L-glutamate + ADP + phosphate + H(+). It carries out the reaction L-aspartyl-tRNA(Asn) + L-glutamine + ATP + H2O = L-asparaginyl-tRNA(Asn) + L-glutamate + ADP + phosphate + 2 H(+). Allows the formation of correctly charged Asn-tRNA(Asn) or Gln-tRNA(Gln) through the transamidation of misacylated Asp-tRNA(Asn) or Glu-tRNA(Gln) in organisms which lack either or both of asparaginyl-tRNA or glutaminyl-tRNA synthetases. The reaction takes place in the presence of glutamine and ATP through an activated phospho-Asp-tRNA(Asn) or phospho-Glu-tRNA(Gln). The polypeptide is Aspartyl/glutamyl-tRNA(Asn/Gln) amidotransferase subunit B (Brucella ovis (strain ATCC 25840 / 63/290 / NCTC 10512)).